A 471-amino-acid chain; its full sequence is Dynein regulatory complex subunit 4 (471 aa).

Residues 1–24 form a disordered region; that stretch reads MAPKKKGTKKESKKDAVATGDIEG. Coiled-coil stretches lie at residues 23 to 239 and 282 to 425; these read EGAS…YNDI and LSRA…DVAK.

The protein belongs to the DRC4 family. As to quaternary structure, component of the nexin-dynein regulatory complex (N-DRC). Interacts with DRC1, DRC2 and DRC5.

It is found in the cytoplasm. It localises to the cytoskeleton. Its subcellular location is the flagellum axoneme. The protein localises to the flagellum basal body. Its function is as follows. Component of the nexin-dynein regulatory complex (N-DRC), a key regulator of ciliary/flagellar motility which maintains the alignment and integrity of the distal axoneme and regulates microtubule sliding in motile axonemes. Plays an important role in the assembly of the N-DRC linker. The polypeptide is Dynein regulatory complex subunit 4 (Chlamydomonas reinhardtii (Chlamydomonas smithii)).